We begin with the raw amino-acid sequence, 491 residues long: Protein nucleotidyltransferase YdiU (491 aa).

The ATP site is built by Gly-94, Gly-96, Arg-97, Lys-117, Asp-129, Gly-130, Arg-180, and Arg-187. The active-site Proton acceptor is the Asp-256. Residues Asn-257 and Asp-266 each coordinate Mg(2+). Position 266 (Asp-266) interacts with ATP.

It belongs to the SELO family. The cofactor is Mg(2+). Mn(2+) is required as a cofactor.

The enzyme catalyses L-seryl-[protein] + ATP = 3-O-(5'-adenylyl)-L-seryl-[protein] + diphosphate. It catalyses the reaction L-threonyl-[protein] + ATP = 3-O-(5'-adenylyl)-L-threonyl-[protein] + diphosphate. It carries out the reaction L-tyrosyl-[protein] + ATP = O-(5'-adenylyl)-L-tyrosyl-[protein] + diphosphate. The catalysed reaction is L-histidyl-[protein] + UTP = N(tele)-(5'-uridylyl)-L-histidyl-[protein] + diphosphate. The enzyme catalyses L-seryl-[protein] + UTP = O-(5'-uridylyl)-L-seryl-[protein] + diphosphate. It catalyses the reaction L-tyrosyl-[protein] + UTP = O-(5'-uridylyl)-L-tyrosyl-[protein] + diphosphate. Functionally, nucleotidyltransferase involved in the post-translational modification of proteins. It can catalyze the addition of adenosine monophosphate (AMP) or uridine monophosphate (UMP) to a protein, resulting in modifications known as AMPylation and UMPylation. The sequence is that of Protein nucleotidyltransferase YdiU from Clostridium botulinum (strain 657 / Type Ba4).